A 140-amino-acid chain; its full sequence is Hexon-interlacing protein (140 aa).

Residues 100–127 are a coiled coil; that stretch reads LTALLAQLDSLTRELNVVSQQLLDLRQQ.

This sequence belongs to the adenoviridae hexon-interlacing protein family. Homotrimer. Interacts with hexon protein; this interaction tethers the hexons together. Self-interacts with adjacent proteins. Interacts with kinesin light chain KLC1; this interaction leads to capsid disruption at the nuclear pore complex during virus entry into host cell.

Its subcellular location is the virion. The protein localises to the host nucleus. Its function is as follows. Structural component of the virion that acts as a cement protein on the capsid exterior and forms triskelion structures consisting of three molecules that stabilize three hexon trimers at the center of each icosahedral facet and fixes the peripentonal hexons. Dispensable for assembly. During virus entry, recruits the anterograde motor kinesin-1 to the capsid docked at the nuclear pore complex thereby subjecting the docked capsid to a pulling force. The resulting tension leads to capsid disruption, dispersion of capsid fragments toward cell periphery and eventually viral DNA entry into the host nucleus. The sequence is that of Hexon-interlacing protein from Human adenovirus C serotype 5 (HAdV-5).